We begin with the raw amino-acid sequence, 1068 residues long: TSC22 domain family protein 1 (1068 aa).

The segment at 1–98 (MHQPPESTAA…SQAQLQAQPL (98 aa)) is required for interaction with TGFBR1 and promotion of TGF-beta signaling. 3 disordered regions span residues 23-110 (AHPA…KKSG), 125-288 (ISSN…SPAS), and 602-623 (YSQA…QQLQ). The span at 36–55 (GSASALNAAGTGVGSSATSS) shows a compositional bias: low complexity. Residues 58 to 70 (FPPPSLLQPPPPA) show a composition bias toward pro residues. Positions 84-100 (SLNLLSQAQLQAQPLAP) are enriched in low complexity. A compositionally biased stretch (acidic residues) spans 133 to 142 (EDTESYDDLD). Residues 216 to 240 (HPHHLHHHHHIHHGHHLQHGHHHPS) are compositionally biased toward basic residues. Low complexity predominate over residues 241–250 (HVAVASASIP). Polar residues predominate over residues 261–271 (KLSTTGSSDSI). A Phosphoserine modification is found at Ser-263. The segment covering 272–288 (TPVAPTSAVSSSGSPAS) has biased composition (low complexity). Over residues 609 to 620 (VQTPLPGAPPPQ) the composition is skewed to pro residues. Residues 1000–1021 (VLKEQIKELIEKNSQLEQENNL) form a leucine-zipper region. Residues 1032-1068 (AQFQAQLQTGSPPATTQPQGTTQPPAQPASQGSGPTA) form a disordered region. Residues 1039 to 1068 (QTGSPPATTQPQGTTQPPAQPASQGSGPTA) are compositionally biased toward low complexity.

It belongs to the TSC-22/Dip/Bun family. As to quaternary structure, forms homodimers. Forms heterodimers. Component of a complex composed of TSC22D1 (via N-terminus), TGFBR1 and TGFBR2; the interaction between TSC22D1 and TGFBR1 is inhibited by SMAD7 and promoted by TGFB1. Interacts with SMAD7; the interaction requires TGF-beta and the interaction is inhibited by TGFBR1. Interacts with TPT1/fortilin; interaction results in the destabilization of TSC22D1 protein and prevents TSC22D1-mediated apoptosis. Interacts with SMAD4 (via N-terminus). Interacts with ACVRL1/ALK1, ACVR1/ALK2, BMPR1A/ALK3, ACVR1B/ALK4, BMPR1B/ALK6, ACVR2A/ACTRII, and BMPR2. Interacts with SMAD6. Interacts with TFE3; the interaction is enhanced in the presence of TGF-beta. Forms a heterodimer with TSC22D4/THG1. In terms of assembly, forms a heterodimer with TSC22D4/THG1. Interacts with histone H1-2. Interacts with GNL3.

The protein resides in the cytoplasm. The protein localises to the nucleus. It is found in the cell membrane. Its subcellular location is the mitochondrion. In terms of biological role, transcriptional repressor. Acts on the C-type natriuretic peptide (CNP) promoter. Acts to promote CASP3-mediated apoptosis. Positively regulates TGF-beta signaling by interacting with SMAD7 which inhibits binding of SMAD7 to TGFBR1, preventing recruitment of SMURF ubiquitin ligases to TGFBR1 and inhibiting SMURF-mediated ubiquitination and degradation of TGFBR1. Contributes to enhancement of TGF-beta signaling by binding to and modulating the transcription activator activity of SMAD4. Promotes TGF-beta-induced transcription of COL1A2; via its interaction with TFE3 at E-boxes in the gene proximal promoter. Plays a role in the repression of hematopoietic precursor cell growth. Promotes IL2 deprivation-induced apoptosis in T-lymphocytes, via repression of TSC22D3/GILZ transcription and activation of the caspase cascade. Functionally, may act to negatively regulate TGFB3 signaling and thereby inhibit cell death in mammary gland cells. Positively regulates cell death in response to TGFB3 during mammary gland involution. This chain is TSC22 domain family protein 1, found in Macaca fascicularis (Crab-eating macaque).